The sequence spans 298 residues: Probable endonuclease 4 (298 aa).

The Zn(2+) site is built by H70, H111, E146, D180, H183, H215, D228, H230, and E260.

This sequence belongs to the AP endonuclease 2 family. Zn(2+) serves as cofactor.

The enzyme catalyses Endonucleolytic cleavage to 5'-phosphooligonucleotide end-products.. Endonuclease IV plays a role in DNA repair. It cleaves phosphodiester bonds at apurinic or apyrimidinic (AP) sites, generating a 3'-hydroxyl group and a 5'-terminal sugar phosphate. In Halalkalibacterium halodurans (strain ATCC BAA-125 / DSM 18197 / FERM 7344 / JCM 9153 / C-125) (Bacillus halodurans), this protein is Probable endonuclease 4.